Here is a 486-residue protein sequence, read N- to C-terminus: NADH-quinone oxidoreductase subunit N (486 aa).

The next 14 helical transmembrane spans lie at 8 to 28 (FIAL…MLAV), 38 to 58 (ATLS…VLGV), 73 to 93 (ACFY…LAHA), 105 to 125 (LYLL…AQHL), 128 to 148 (LFIG…YAFF), 169 to 189 (FLLF…FAGL), 196 to 216 (HVLS…GLGF), 235 to 255 (PAPV…AVLL), 269 to 289 (LLNI…NLLA), 304 to 324 (IAHL…AVEA), 325 to 345 (VGVY…VITL), 373 to 393 (AVMT…GFIG), 405 to 427 (HLWW…YLRV), and 454 to 474 (IMLV…QPLL).

This sequence belongs to the complex I subunit 2 family. In terms of assembly, NDH-1 is composed of 13 different subunits. Subunits NuoA, H, J, K, L, M, N constitute the membrane sector of the complex.

The protein resides in the cell inner membrane. It carries out the reaction a quinone + NADH + 5 H(+)(in) = a quinol + NAD(+) + 4 H(+)(out). NDH-1 shuttles electrons from NADH, via FMN and iron-sulfur (Fe-S) centers, to quinones in the respiratory chain. The immediate electron acceptor for the enzyme in this species is believed to be ubiquinone. Couples the redox reaction to proton translocation (for every two electrons transferred, four hydrogen ions are translocated across the cytoplasmic membrane), and thus conserves the redox energy in a proton gradient. This Pseudomonas aeruginosa (strain ATCC 15692 / DSM 22644 / CIP 104116 / JCM 14847 / LMG 12228 / 1C / PRS 101 / PAO1) protein is NADH-quinone oxidoreductase subunit N.